Consider the following 805-residue polypeptide: Leucine--tRNA ligase (805 aa).

A 'HIGH' region motif is present at residues 40-51 (PYPSGSGLHVGH). Positions 576 to 580 (KMSKS) match the 'KMSKS' region motif. Lysine 579 contributes to the ATP binding site.

It belongs to the class-I aminoacyl-tRNA synthetase family.

The protein resides in the cytoplasm. It catalyses the reaction tRNA(Leu) + L-leucine + ATP = L-leucyl-tRNA(Leu) + AMP + diphosphate. This is Leucine--tRNA ligase from Chlorobium limicola (strain DSM 245 / NBRC 103803 / 6330).